The chain runs to 450 residues: Molybdate-anion transporter (450 aa).

The next 12 membrane-spanning stretches (helical) occupy residues 1–21, 43–63, 79–99, 128–148, 174–194, 195–215, 249–269, 278–298, 311–331, 344–364, 376–396, and 409–429; these read MLVT…GLEL, LDFY…APYL, ILYV…SSLV, FVLL…FSAF, AAFW…AVAS, WIGL…ALAG, VLLL…FVFL, GAPL…GSSL, PMHL…MLTF, FIAF…MSFL, GVLN…LLVL, and FSIC…LFTV.

It belongs to the major facilitator superfamily.

The protein localises to the cell membrane. Mediates high-affinity intracellular uptake of the rare oligo-element molybdenum. The protein is Molybdate-anion transporter (MFSD5) of Pongo abelii (Sumatran orangutan).